The sequence spans 345 residues: 4-hydroxythreonine-4-phosphate dehydrogenase (345 aa).

Residues His-148 and Thr-149 each coordinate substrate. The a divalent metal cation site is built by His-182, His-227, and His-282. Lys-290, Asn-299, and Arg-308 together coordinate substrate.

Belongs to the PdxA family. In terms of assembly, homodimer. Requires Zn(2+) as cofactor. The cofactor is Mg(2+). Co(2+) is required as a cofactor.

It localises to the cytoplasm. It catalyses the reaction 4-(phosphooxy)-L-threonine + NAD(+) = 3-amino-2-oxopropyl phosphate + CO2 + NADH. Its pathway is cofactor biosynthesis; pyridoxine 5'-phosphate biosynthesis; pyridoxine 5'-phosphate from D-erythrose 4-phosphate: step 4/5. Its function is as follows. Catalyzes the NAD(P)-dependent oxidation of 4-(phosphooxy)-L-threonine (HTP) into 2-amino-3-oxo-4-(phosphooxy)butyric acid which spontaneously decarboxylates to form 3-amino-2-oxopropyl phosphate (AHAP). This chain is 4-hydroxythreonine-4-phosphate dehydrogenase, found in Bradyrhizobium diazoefficiens (strain JCM 10833 / BCRC 13528 / IAM 13628 / NBRC 14792 / USDA 110).